We begin with the raw amino-acid sequence, 514 residues long: 2,3-bisphosphoglycerate-independent phosphoglycerate mutase (514 aa).

Residues D14 and S64 each contribute to the Mn(2+) site. The Phosphoserine intermediate role is filled by S64. Substrate-binding positions include H125, R155–D156, R187, R193, R263–R266, and K336. Mn(2+)-binding residues include D403, H407, D444, H445, and H463.

Belongs to the BPG-independent phosphoglycerate mutase family. In terms of assembly, monomer. Mn(2+) serves as cofactor.

The enzyme catalyses (2R)-2-phosphoglycerate = (2R)-3-phosphoglycerate. It participates in carbohydrate degradation; glycolysis; pyruvate from D-glyceraldehyde 3-phosphate: step 3/5. Catalyzes the interconversion of 2-phosphoglycerate and 3-phosphoglycerate. This Escherichia coli O1:K1 / APEC protein is 2,3-bisphosphoglycerate-independent phosphoglycerate mutase.